A 479-amino-acid polypeptide reads, in one-letter code: Catalase easC (479 aa).

The span at 1-13 (MASQVSLTAQGSG) shows a compositional bias: polar residues. The interval 1–28 (MASQVSLTAQGSGLSAPLNGPEHLTSTT) is disordered. His-53 is a catalytic residue. Residue Tyr-343 participates in heme binding. The interval 365–385 (HAANDAPKTKKPAVPLQKQSR) is disordered.

The protein belongs to the catalase family. Requires heme as cofactor.

It participates in alkaloid biosynthesis; ergot alkaloid biosynthesis. Catalase; part of the gene cluster that mediates the biosynthesis of fungal ergot alkaloid. DmaW catalyzes the first step of ergot alkaloid biosynthesis by condensing dimethylallyl diphosphate (DMAP) and tryptophan to form 4-dimethylallyl-L-tryptophan. The second step is catalyzed by the methyltransferase easF that methylates 4-dimethylallyl-L-tryptophan in the presence of S-adenosyl-L-methionine, resulting in the formation of 4-dimethylallyl-L-abrine. The catalase easC and the FAD-dependent oxidoreductase easE then transform 4-dimethylallyl-L-abrine to chanoclavine-I which is further oxidized by easD in the presence of NAD(+), resulting in the formation of chanoclavine-I aldehyde. Agroclavine dehydrogenase easG then mediates the conversion of chanoclavine-I aldehyde to agroclavine via a non-enzymatic adduct reaction: the substrate is an iminium intermediate that is formed spontaneously from chanoclavine-I aldehyde in the presence of glutathione. Further conversion of agroclavine to paspalic acid is a two-step process involving oxidation of agroclavine to elymoclavine and of elymoclavine to paspalic acid, the second step being performed by the elymoclavine oxidase cloA. However, cloA does not encode a functional enzyme indicating that C.fusiformis terminates its ergot alkaloid pathway at elymoclavine. This is Catalase easC from Claviceps fusiformis (Ergot fungus).